Here is a 104-residue protein sequence, read N- to C-terminus: Protein U9 (104 aa).

Residues glycine 37–lysine 54 traverse the membrane as a helical segment.

Its subcellular location is the host membrane. This Human herpesvirus 6B (HHV-6 variant B) protein is Protein U9 (U9).